The sequence spans 284 residues: Adenylate kinase 1, chloroplastic (284 aa).

The transit peptide at methionine 1–phenylalanine 36 directs the protein to the chloroplast. Position 61 to 66 (glycine 61 to threonine 66) interacts with ATP. Residues alanine 81–valine 110 are NMP. AMP-binding positions include threonine 82, arginine 87, lysine 108–valine 110, glycine 138–arginine 141, and glutamine 145. Residues glycine 174–aspartate 222 are LID. Arginine 175 is a binding site for ATP. 2 residues coordinate AMP: arginine 219 and arginine 230. Glycine 258 serves as a coordination point for ATP.

This sequence belongs to the adenylate kinase family. Monomer. In terms of tissue distribution, highly expressed in flowers and at lower levels in roots, leaves and stems.

It localises to the plastid. It is found in the chloroplast stroma. The catalysed reaction is AMP + ATP = 2 ADP. Its function is as follows. Catalyzes the reversible transfer of the terminal phosphate group between ATP and AMP. Plays an important role in cellular energy homeostasis, adenine nucleotide metabolism and plant growth. The sequence is that of Adenylate kinase 1, chloroplastic (ADK) from Arabidopsis thaliana (Mouse-ear cress).